Reading from the N-terminus, the 131-residue chain is MNWLDEINWNADGLVPAIAQDHKTGRVLMMAWMNREALQLTAQENRAIYWSRSRGKLWRKGEESGHVQQLHELRLDCDADVIILMVEQIGGIACHTGRESCFYRVFENGAWKVVEPVLKDPHAIYAEHKHE.

Mg(2+) is bound at residue D76. C77 is a binding site for Zn(2+). Residues D78 and D80 each contribute to the Mg(2+) site. Zn(2+)-binding residues include C94 and C101.

Belongs to the PRA-CH family. As to quaternary structure, homodimer. Requires Mg(2+) as cofactor. Zn(2+) is required as a cofactor.

The protein resides in the cytoplasm. It carries out the reaction 1-(5-phospho-beta-D-ribosyl)-5'-AMP + H2O = 1-(5-phospho-beta-D-ribosyl)-5-[(5-phospho-beta-D-ribosylamino)methylideneamino]imidazole-4-carboxamide. It participates in amino-acid biosynthesis; L-histidine biosynthesis; L-histidine from 5-phospho-alpha-D-ribose 1-diphosphate: step 3/9. Its function is as follows. Catalyzes the hydrolysis of the adenine ring of phosphoribosyl-AMP. The protein is Phosphoribosyl-AMP cyclohydrolase of Stutzerimonas stutzeri (strain A1501) (Pseudomonas stutzeri).